A 907-amino-acid chain; its full sequence is Glutamate receptor 1 (907 aa).

A signal peptide spans 1-18 (MPYIFAFFCTGFLGAVVG). Residues 19–536 (ANFPNNIQIG…GVFSFLDPLA (518 aa)) are Extracellular-facing. N-linked (GlcNAc...) asparagine glycosylation is found at Asn-63, Asn-249, Asn-257, Asn-363, Asn-401, and Asn-406. Cys-75 and Cys-323 form a disulfide bridge. Residues Pro-492, Thr-494, and Arg-499 each contribute to the L-glutamate site. Residues 537 to 557 (YEIWMCIVFAYIGVSVVLFLV) traverse the membrane as a helical segment. Over 558 to 584 (SRFSPYEWHSEEFEEGRDQTTSDQSNE) the chain is Cytoplasmic. Positions 585–600 (FGIFNSLWFSLGAFMQ) form an intramembrane region, helical; Pore-forming. The stretch at 601 to 603 (QGC) is an intramembrane region. The S-palmitoyl cysteine moiety is linked to residue Cys-603. The Cytoplasmic portion of the chain corresponds to 604–609 (DISPRS). A helical transmembrane segment spans residues 610–630 (LSGRIVGGVWWFFTLIIISSY). Residues 631–805 (TANLAAFLTV…DKTSALSLSN (175 aa)) are Extracellular-facing. Position 645 is a phosphoserine (Ser-645). Positions 668 and 669 each coordinate L-glutamate. The residue at position 710 (Ser-710) is a Phosphoserine; by PKC. Residue Glu-719 participates in L-glutamate binding. A disulfide bridge connects residues Cys-732 and Cys-787. The helical transmembrane segment at 806–826 (VAGVFYILIGGLGLAMLVALI) threads the bilayer. Residues 827-907 (EFCYKSRSES…SGMPLGATGL (81 aa)) are Cytoplasmic-facing. A lipid anchor (S-palmitoyl cysteine) is attached at Cys-829. Ser-849 is subject to Phosphoserine; by PKC, PKA and CAMK2. Residues 857–881 (STLPRNSGAGASGGGGSGENGRVVS) are disordered. Ser-863 is modified (phosphoserine; by PKC, PKA and PKG/PRKG2). Residues 866–875 (GASGGGGSGE) show a composition bias toward gly residues. The short motif at 904–907 (ATGL) is the PDZ-binding element.

This sequence belongs to the glutamate-gated ion channel (TC 1.A.10.1) family. GRIA1 subfamily. In terms of assembly, homotetramer or heterotetramer of pore-forming glutamate receptor subunits; heteromeric assembly can be the result of both receptor subtype and flip-flop forms and according the composition, one partner can be dominant with respect to the fast desensitizing current component, whereas the other can determine the steady-state component. Tetramers may be formed by the dimerization of dimers. Found in a complex with GRIA2, GRIA3, GRIA4, CNIH2, CNIH3, CACNG2, CACNG3, CACNG4, CACNG5, CACNG7 and CACNG8. Interacts with HIP1 and RASGRF2. Interacts with SYNDIG1 and GRIA2. Interacts with DLG1 (via C-terminus). Interacts with LRFN1. Interacts with PRKG2. Interacts with CNIH2 and CACNG2. Interacts with CACNG5; this interaction modulates the gating. Interacts (via C-terminus) with PDLIM4 (via LIM domain); this interaction as well as the interaction of PDLIM4 with alpha-actinin is required for their colocalization in early endosomes. Interacts with SNX27 (via PDZ domain); the interaction is required for recycling to the plasma membrane when endocytosed and prevent degradation in lysosomes. Interacts (via PDZ-binding motif) with SHANK3 (via PDZ domain). Interacts with CACNG3; associates GRIA1 with the adapter protein complex 4 (AP-4) to target GRIA1 to the somatodendritic compartment of neurons. Interacts with CACNG2; this interaction mediates traffick to the plasma membrane and modulation of desensitization. Interaction with CNIH2 and CNIH3; this interaction promotes expression at the plasma membrane and extensively modulates their gating properties by slowing deactivation and desensitization kinetics. Found in a complex with GRIA2, GRIA3, GRIA4, DLG4, CACNG8 and CNIH2. Phosphorylated at Ser-645. Phosphorylated at Ser-710 by PKC. Phosphorylated at Ser-849 by PKC, PKA and CAMK2. Phosphorylated at Ser-863 by PKC, PKA and PRKG2. Phosphorylation of Ser-863 is reduced by induction of long-term depression and increased by induction of long-term potentiation. In terms of processing, palmitoylated. Depalmitoylated by CPT1C and upon L-glutamate stimulation. ZDHHC3/GODZ specifically palmitoylates Cys-603, which leads to Golgi retention and decreased cell surface expression. In contrast, Cys-829 palmitoylation does not affect cell surface expression but regulates stimulation-dependent endocytosis. As to expression, detected in cerebellum (at protein level).

It is found in the cell membrane. Its subcellular location is the endoplasmic reticulum membrane. The protein resides in the postsynaptic cell membrane. The protein localises to the postsynaptic density membrane. It localises to the cell projection. It is found in the dendrite. Its subcellular location is the dendritic spine. The protein resides in the early endosome membrane. The protein localises to the recycling endosome membrane. It localises to the presynapse. It is found in the synapse. The catalysed reaction is Ca(2+)(in) = Ca(2+)(out). It catalyses the reaction Na(+)(in) = Na(+)(out). The enzyme catalyses Mg(2+)(in) = Mg(2+)(out). It carries out the reaction Li(+)(in) = Li(+)(out). The catalysed reaction is K(+)(in) = K(+)(out). It catalyses the reaction Sr(2+)(in) = Sr(2+)(out). Glutamate-gated receptor activity inhibited by DNQX (6,7-dinitroquinoxaline-2,3-dione). Ionotropic glutamate receptor that functions as a ligand-gated cation channel, gated by L-glutamate and glutamatergic agonists such as alpha-amino-3-hydroxy-5-methyl-4-isoxazolepropionic acid (AMPA), quisqualic acid, and kainic acid. L-glutamate acts as an excitatory neurotransmitter at many synapses in the central nervous system. Binding of the excitatory neurotransmitter L-glutamate induces a conformation change, leading to the opening of the cation channel, and thereby converts the chemical signal to an electrical impulse upon entry of monovalent and divalent cations such as sodium and calcium. The receptor then desensitizes rapidly and enters in a transient inactive state, characterized by the presence of bound agonist. In the presence of CACNG2 or CACNG4 or CACNG7 or CACNG8, shows resensitization which is characterized by a delayed accumulation of current flux upon continued application of L-glutamate. Resensitization is blocked by CNIH2 through interaction with CACNG8 in the CACNG8-containing AMPA receptors complex. Calcium (Ca(2+)) permeability depends on subunits composition and, heteromeric channels containing edited GRIA2 subunit are calcium-impermeable. Also permeable to other divalents cations such as strontium(2+) and magnesium(2+) and monovalent cations such as potassium(1+) and lithium(1+). The sequence is that of Glutamate receptor 1 from Rattus norvegicus (Rat).